The following is an 86-amino-acid chain: Small ribosomal subunit protein uS17 (86 aa).

Belongs to the universal ribosomal protein uS17 family. In terms of assembly, part of the 30S ribosomal subunit.

Functionally, one of the primary rRNA binding proteins, it binds specifically to the 5'-end of 16S ribosomal RNA. The protein is Small ribosomal subunit protein uS17 of Streptococcus pyogenes serotype M6 (strain ATCC BAA-946 / MGAS10394).